Here is a 2535-residue protein sequence, read N- to C-terminus: Piezo-type mechanosensitive ion channel component 1 (2535 aa).

Helical transmembrane passes span 13 to 25 (LLLPCTLLAASLL), 29 to 44 (ALSLVYLLFLLLLPWL), and 59 to 81 (LLRALLCLSLLFLVAHVAFQICL). Residue asparagine 100 is glycosylated (N-linked (GlcNAc...) asparagine). A run of 5 helical transmembrane segments spans residues 122–138 (VAPDLGVLVASSLCLGL), 193–212 (LLVTSGRMLVIVLLALAGIA), 215–234 (SAFSSVYLMVFLAICTWWSC), 246–266 (LCVMVSCFGAGHLVCLYCYQT), and 308–328 (WPIYVSPGILLLLYYTATSLL). The segment covering 346-357 (DEEHELELDQLE) has biased composition (acidic residues). Residues 346–377 (DEEHELELDQLEPEPQARGTTQGATPTTTGPD) are disordered. The segment covering 358 to 376 (PEPQARGTTQGATPTTTGP) has biased composition (low complexity). Residue asparagine 380 is glycosylated (N-linked (GlcNAc...) asparagine). Transmembrane regions (helical) follow at residues 416-436 (LILDQSYVCALIAMMVWSIMY), 439-454 (WLTFVLLLWACLIWTV), 460-482 (LAMLCSPCILLYGLTLCCLRYVW), 510-527 (CLDLGAMLLYLLTFWLLL), 572-592 (IYVKYWIYVCAGMFIVVSFAG), 594-614 (LVVYKIVYMFLFLLCLTLFQV), 625-646 (VFWWLVVAYTMLVLIAVYTFQF), and 677-693 (LFSSILIPGFFLLACIL). Residue serine 749 is modified to Phosphoserine. 12 helical membrane-spanning segments follow: residues 803 to 814 (LVALYTVWVALK), 818 to 831 (VMNLLLVVLWAFAL), 846 to 860 (VWTCIIIVCKMLYQL), 913 to 940 (GYIQNHLQILLLLVFEAVVYRRQEHYRR), 981 to 996 (GLEICFLMAVNVIGQR), 999 to 1014 (FMVILHGCWLVAILTR), 1028 to 1043 (CLFLTLFLLYQYLLCL), 1083 to 1104 (TNLISDFLLLLCASQQWQVFSA), 1140 to 1166 (YLDMLKVAVFRYLFWLVLVVVFVTGAT), 1172 to 1190 (GLGYLLACFYLLLFGTTLL), 1204 to 1222 (LILYNVTVIISKNMLSLLS), and 1272 to 1288 (IWDSICFFFLLLQRRVF). Positions 1325-1356 (HRQTEERSLAQLKRQMKRIRAKQEKYRQSQAS) form a coiled coil. Disordered regions lie at residues 1345-1383 (AKQEKYRQSQASRGQLQSTDPQEPGPDSPGGSSPPRTQW) and 1556-1597 (SGPV…NTRS). Residues 1352 to 1365 (QSQASRGQLQSTDP) are compositionally biased toward polar residues. A phosphoserine mark is found at serine 1372 and serine 1377. Residues 1579-1597 (SSMTDDTGSPLSTGYNTRS) are compositionally biased toward polar residues. A phosphoserine mark is found at serine 1614, serine 1618, and serine 1633. 4 consecutive transmembrane segments (helical) span residues 1644-1687 (PELE…LNHM), 1692-1707 (AASLVLPVLVFLWAML), 1716-1734 (FWMTAIVFTEVMVVTKYLF), and 1767-1788 (DSYIKYDLVQLMALFFHRSQLL). Composition is skewed to basic and acidic residues over residues 1801–1811 (PKDHCRSSEKD) and 1842–1867 (PKDHIQGKGSVRSKDEIQDPPEDLKP). The interval 1801-1911 (PKDHCRSSEK…GREAAGRKRL (111 aa)) is disordered. Basic residues predominate over residues 1868–1881 (QHRRHISIRFRRRK). Transmembrane regions (helical) follow at residues 1965 to 1984 (YALMFLADIVDIVVIIFGFW), 2005 to 2021 (PQAFLFMLLVQFGTMVI), 2036 to 2056 (AFQVVLVVAIHLWMFFILPAV), 2065 to 2080 (AVAQLWYFVKCIYFAL), and 2181 to 2201 (GLIILFLIAIIWFPLLFMSLI). Cysteine 2425 and cysteine 2429 form a disulfide bridge. The helical transmembrane segment at 2446 to 2466 (LGFLAGYGIVGLYVSIVLVVG) threads the bilayer.

Belongs to the PIEZO (TC 1.A.75) family. Homotrimer; the homotrimer forms a propeller-shaped Piezo channel with a cation-ion conducting pore. Heterotrimeric interaction may occur between PIEZO1 and PIEZO2. Interacts with PKD2. Interacts with STOM13. Interacts with TMC1, TMC2, PCDH15 and CIB2; the interaction may be part of the MET complex. Interacts with MDFIC (via C-terminus); the interaction prolongs Piezo channel inactivation. Interacts with MDFI (via C-terminus); the interaction prolongs Piezo channel inactivation. As to expression, moderate expression in lung and kidney. Very weak expression in heart, spleen and liver.

The protein resides in the endoplasmic reticulum membrane. It localises to the endoplasmic reticulum-Golgi intermediate compartment membrane. Its subcellular location is the cell membrane. It is found in the cell projection. The protein localises to the lamellipodium membrane. It carries out the reaction K(+)(in) = K(+)(out). The enzyme catalyses Na(+)(in) = Na(+)(out). It catalyses the reaction Ca(2+)(in) = Ca(2+)(out). The catalysed reaction is Mg(2+)(in) = Mg(2+)(out). Its activity is regulated as follows. Regulated by auxillary subunits MDFIC and MDFI. Down-regulated by phosphatidylserines exposed on the cell surface. Divalent ions decrease the single-channel permeability of K(+). Its function is as follows. Pore-forming subunit of the mechanosensitive non-specific cation Piezo channel required for rapidly adapting mechanically activated (MA) currents and has a key role in sensing touch and tactile pain. Piezo channels are homotrimeric three-blade propeller-shaped structures that utilize a cap-motion and plug-and-latch mechanism to gate their ion-conducting pathways. Generates currents characterized by a linear current-voltage relationship that are sensitive to ruthenium red and gadolinium. Conductance to monovalent alkali ions is highest for K(+), intermediate for Na(+) and lowest for Li(+). Divalent ions except for Mn(2+) permeate the channel but more slowly than the monovalent ions and they also reduce K(+) currents. Plays a key role in epithelial cell adhesion by maintaining integrin activation through R-Ras recruitment to the ER, most probably in its activated state, and subsequent stimulation of calpain signaling. In inner ear hair cells, PIEZO1/2 subunits may constitute part of the mechanotransducer (MET) non-selective cation channel complex where they may act as pore-forming ion-conducting component in the complex. In the kidney, may contribute to the detection of intraluminal pressure changes and to urine flow sensing. Acts as a shear-stress sensor that promotes endothelial cell organization and alignment in the direction of blood flow through calpain activation. Plays a key role in blood vessel formation and vascular structure in both development and adult physiology. Acts as a sensor of phosphatidylserine (PS) flipping at the plasma membrane and governs morphogenesis of muscle cells. In myoblasts, flippase-mediated PS enrichment at the inner leaflet of plasma membrane triggers channel activation and Ca(2+) influx followed by Rho GTPases signal transduction, leading to assembly of cortical actomyosin fibers and myotube formation. This chain is Piezo-type mechanosensitive ion channel component 1 (Piezo1), found in Rattus norvegicus (Rat).